The following is a 515-amino-acid chain: Fatty acyl-CoA reductase 1 (515 aa).

The Cytoplasmic segment spans residues 1-465; that stretch reads MVSIPEYYEG…ARKHLNKLRN (465 aa). A helical transmembrane segment spans residues 466–483; that stretch reads IRYGFNTILVILIWRIFI. Topologically, residues 484-515 are peroxisomal; sequence ARSQMARNIWYFVVSLCYKFLSYFRASSTMRY.

The protein belongs to the fatty acyl-CoA reductase family.

Its subcellular location is the peroxisome membrane. The enzyme catalyses a long-chain fatty acyl-CoA + 2 NADPH + 2 H(+) = a long-chain primary fatty alcohol + 2 NADP(+) + CoA. It catalyses the reaction hexadecanoyl-CoA + 2 NADPH + 2 H(+) = hexadecan-1-ol + 2 NADP(+) + CoA. It carries out the reaction octadecanoyl-CoA + 2 NADPH + 2 H(+) = octadecan-1-ol + 2 NADP(+) + CoA. The catalysed reaction is (9Z)-octadecenoyl-CoA + 2 NADPH + 2 H(+) = (9Z)-octadecen-1-ol + 2 NADP(+) + CoA. The enzyme catalyses (9Z,12Z)-octadecadienoyl-CoA + 2 NADPH + 2 H(+) = (9Z,12Z)-octadecadien-1-ol + 2 NADP(+) + CoA. It catalyses the reaction eicosanoyl-CoA + 2 NADPH + 2 H(+) = eicosan-1-ol + 2 NADP(+) + CoA. It carries out the reaction 16-methylheptadecanoyl-CoA + 2 NADPH + 2 H(+) = 16-methylheptadecan-1-ol + 2 NADP(+) + CoA. The catalysed reaction is 18-methylnonadecanoyl-CoA + 2 NADPH + 2 H(+) = 18-methylnonadecan-1-ol + 2 NADP(+) + CoA. Its function is as follows. Catalyzes the reduction of saturated and unsaturated C16 or C18 fatty acyl-CoA to fatty alcohols. It plays an essential role in the production of ether lipids/plasmalogens which synthesis requires fatty alcohols. In parallel, it is also required for wax monoesters production since fatty alcohols also constitute a substrate for their synthesis. The protein is Fatty acyl-CoA reductase 1 of Gallus gallus (Chicken).